We begin with the raw amino-acid sequence, 127 residues long: Protein chibby homolog 1 (127 aa).

Residues 1-25 are disordered; the sequence is MPLFGSIFSPKKTPPRKSASLSNLH. Phosphoserine is present on residues Ser-9 and Ser-20. Residues 60-112 are minimal region for the interaction with PKD2; that stretch reads VADSVISGGVDRRETQRLRKRNQQLEEENNLLRLKVDILLDMLSETTAESHLK. Residues 68–110 adopt a coiled-coil conformation; the sequence is GVDRRETQRLRKRNQQLEEENNLLRLKVDILLDMLSETTAESH. Residues 77–98 are leucine-zipper; mediates homodimerization; sequence LRKRNQQLEEENNLLRLKVDIL.

It belongs to the chibby family. As to quaternary structure, homodimer. Homodimerization is essential for nuclear localization and interaction with KPNA4 but is dispensable for interaction with CTNNB1. Interacts with polycystin-2/PKD2 and GM130. Interacts with the C-terminal region of CTNNB1. Interacts (C-terminus) with TCIM (C-terminus), TCIM competes with CTNNB1 for the interaction with CBY1. Interacts with FAM92A; this interaction facilitates targeting of FAM92A to cilium basal body. Interacts with CIBAR2. Interacts with KPNA4.

The protein localises to the nucleus speckle. It localises to the cytoplasm. The protein resides in the cytoskeleton. Its subcellular location is the cilium basal body. It is found in the microtubule organizing center. The protein localises to the centrosome. It localises to the centriole. The protein resides in the golgi apparatus. Its subcellular location is the trans-Golgi network. It is found in the cell projection. The protein localises to the cilium. It localises to the flagellum. The protein resides in the nucleus. In terms of biological role, inhibits the Wnt/Wingless pathway by binding to CTNNB1/beta-catenin and inhibiting beta-catenin-mediated transcriptional activation through competition with TCF/LEF transcription factors. Has also been shown to play a role in regulating the intracellular trafficking of polycystin-2/PKD2 and possibly of other intracellular proteins. Promotes adipocyte and cardiomyocyte differentiation. This Rattus norvegicus (Rat) protein is Protein chibby homolog 1 (Cby1).